The sequence spans 391 residues: Argininosuccinate synthase (391 aa).

A6 to T14 is an ATP binding site. Position 84 (Y84) interacts with L-citrulline. G114 contacts ATP. L-aspartate contacts are provided by T116, N120, and D121. Residue N120 coordinates L-citrulline. The L-citrulline site is built by R124, S171, S180, E253, and Y265.

Belongs to the argininosuccinate synthase family. Type 1 subfamily. As to quaternary structure, homotetramer.

The protein resides in the cytoplasm. The enzyme catalyses L-citrulline + L-aspartate + ATP = 2-(N(omega)-L-arginino)succinate + AMP + diphosphate + H(+). It participates in amino-acid biosynthesis; L-arginine biosynthesis; L-arginine from L-ornithine and carbamoyl phosphate: step 2/3. This chain is Argininosuccinate synthase, found in Saccharolobus solfataricus (strain ATCC 35092 / DSM 1617 / JCM 11322 / P2) (Sulfolobus solfataricus).